Here is a 160-residue protein sequence, read N- to C-terminus: GTP-dependent dephospho-CoA kinase (160 aa).

GTP is bound by residues D45, I46, V47, D59, K61, E108, and D130.

Belongs to the GTP-dependent DPCK family.

The enzyme catalyses 3'-dephospho-CoA + GTP = GDP + CoA + H(+). It functions in the pathway cofactor biosynthesis; coenzyme A biosynthesis. In terms of biological role, catalyzes the GTP-dependent phosphorylation of the 3'-hydroxyl group of dephosphocoenzyme A to form coenzyme A (CoA). The sequence is that of GTP-dependent dephospho-CoA kinase from Staphylothermus marinus (strain ATCC 43588 / DSM 3639 / JCM 9404 / F1).